The following is a 394-amino-acid chain: Putative 8-amino-7-oxononanoate synthase (394 aa).

Arginine 23 lines the substrate pocket. Residue 110-111 coordinates pyridoxal 5'-phosphate; the sequence is GY. Histidine 135 is a substrate binding site. Residues serine 182, 207-210, and 238-241 each bind pyridoxal 5'-phosphate; these read DEAH and TFSK. Residue lysine 241 is modified to N6-(pyridoxal phosphate)lysine. Threonine 355 serves as a coordination point for substrate.

This sequence belongs to the class-II pyridoxal-phosphate-dependent aminotransferase family. BioF subfamily. In terms of assembly, homodimer. It depends on pyridoxal 5'-phosphate as a cofactor.

The enzyme catalyses 6-carboxyhexanoyl-[ACP] + L-alanine + H(+) = (8S)-8-amino-7-oxononanoate + holo-[ACP] + CO2. The protein operates within cofactor biosynthesis; biotin biosynthesis. Its function is as follows. Catalyzes the decarboxylative condensation of pimeloyl-[acyl-carrier protein] and L-alanine to produce 8-amino-7-oxononanoate (AON), [acyl-carrier protein], and carbon dioxide. This is Putative 8-amino-7-oxononanoate synthase (bioF) from Bacillus cereus (strain Q1).